The following is a 115-amino-acid chain: uncharacterized protein (115 aa).

Residues 1 to 91 (MTEYNANSIR…SELEGFKNVS (91 aa)) form the HTH arsR-type domain. A DNA-binding region (H-T-H motif) is located at residues 30 to 53 (ASLISHTLLLSYATVLRHLRILND).

Its function is as follows. Essential for virus function. This is an uncharacterized protein from Saccharolobus solfataricus (Sulfolobus solfataricus).